Consider the following 177-residue polypeptide: Large ribosomal subunit protein uL6 (177 aa).

The protein belongs to the universal ribosomal protein uL6 family. In terms of assembly, part of the 50S ribosomal subunit.

This protein binds to the 23S rRNA, and is important in its secondary structure. It is located near the subunit interface in the base of the L7/L12 stalk, and near the tRNA binding site of the peptidyltransferase center. This Sinorhizobium fredii (strain NBRC 101917 / NGR234) protein is Large ribosomal subunit protein uL6.